The primary structure comprises 372 residues: BTB/POZ and TAZ domain-containing protein 4 (372 aa).

A disordered region spans residues 14–37 (SADSSSVPIPPPLPSKSDGLKKKL). The BTB domain maps to 60–128 (ADVVIYTDNG…LYSSCYEKEE (69 aa)). A TAZ-type zinc finger spans residues 238–330 (RIYSQLYEAM…SDQCRVPLCR (93 aa)). The caM-binding stretch occupies residues 341 to 364 (KKDESRWKLLVKNVLGSKKIGGSP).

Interacts with GTE11/BET10 through the BTB domain. In terms of tissue distribution, preferentially expressed in leaves, stems and flowers.

Its subcellular location is the cytoplasm. The protein operates within protein modification; protein ubiquitination. Functionally, may act as a substrate-specific adapter of an E3 ubiquitin-protein ligase complex (CUL3-RBX1-BTB) which mediates the ubiquitination and subsequent proteasomal degradation of target proteins. This Arabidopsis thaliana (Mouse-ear cress) protein is BTB/POZ and TAZ domain-containing protein 4 (BT4).